The sequence spans 154 residues: Histone H2B type F-M (154 aa).

Residues 1–18 (MAAASAMAEASSETTSEE) are compositionally biased toward low complexity. A disordered region spans residues 1–61 (MAAASAMAEA…RGDSFGDSFT (61 aa)). Positions 34–50 (QKQKRRGCRGSRRRHAN) are enriched in basic residues.

Belongs to the histone H2B family. The nucleosome is a histone octamer containing two molecules each of H2A, H2B, H3 and H4 assembled in one H3-H4 heterotetramer and two H2A-H2B heterodimers. The octamer wraps approximately 147 bp of DNA.

Its subcellular location is the nucleus. It localises to the chromosome. Core component of nucleosome. Nucleosomes wrap and compact DNA into chromatin, limiting DNA accessibility to the cellular machineries which require DNA as a template. Histones thereby play a central role in transcription regulation, DNA repair, DNA replication and chromosomal stability. DNA accessibility is regulated via a complex set of post-translational modifications of histones, also called histone code, and nucleosome remodeling. The polypeptide is Histone H2B type F-M (Homo sapiens (Human)).